A 409-amino-acid chain; its full sequence is Killer cell lectin-like receptor subfamily G member 2 (409 aa).

A disordered region spans residues 1-120; sequence MEESWEAAPG…GAEPAPSAWA (120 aa). Low complexity predominate over residues 41 to 53; the sequence is PEGPESSPSPAGA. The span at 72–81 shows a compositional bias: pro residues; that stretch reads SPRPGSPRVP. Residues 104–120 show a composition bias toward low complexity; that stretch reads PRNGEAPGAEPAPSAWA. At serine 158 the chain carries Phosphoserine. The interval 193–216 is disordered; sequence TESGCDAEGRASPAEGSAGSPGSP. The span at 202-216 shows a compositional bias: low complexity; sequence RASPAEGSAGSPGSP. The helical transmembrane segment at 263–283 threads the bilayer; it reads WALAFMAVLLAVSGVVIVVLA. A C-type lectin domain is found at 300-405; sequence SEEHCYYFSA…CSTPRPWVCA (106 aa). 2 cysteine pairs are disulfide-bonded: cysteine 321-cysteine 404 and cysteine 383-cysteine 396.

Its subcellular location is the membrane. This is Killer cell lectin-like receptor subfamily G member 2 (KLRG2) from Homo sapiens (Human).